Consider the following 387-residue polypeptide: Beta-citrylglutamate synthase B (387 aa).

An ATP-grasp domain is found at 119-304; the sequence is FQELAGHGVP…VAGIIADYAA (186 aa). Residues lysine 158, 193–203, and arginine 219 each bind ATP; that span reads QKYIKESHGRD. Positions 264, 277, and 279 each coordinate Mg(2+). Mn(2+)-binding residues include aspartate 264, glutamate 277, and asparagine 279. Positions 325 to 361 are disordered; sequence ASETSEPELGPPASAAVDNMSASSSSVDSDPESTTER. Positions 337-352 are enriched in low complexity; the sequence is ASAAVDNMSASSSSVD.

Belongs to the RimK family. Requires Mg(2+) as cofactor. It depends on Mn(2+) as a cofactor. As to expression, strongly expressed in brain and testis. Expressed in eyes, thymus, lung, kidney, skeletal muscle, spleen, skin and heart. Expressed in neurons of the neocortex, the gray matter and Purkinje cells.

The protein resides in the cytoplasm. The catalysed reaction is citrate + L-glutamate + ATP = beta-citrylglutamate + ADP + phosphate + H(+). The enzyme catalyses N-acetyl-L-aspartate + L-glutamate + ATP = N-acetyl-L-aspartyl-L-glutamate + ADP + phosphate + H(+). Catalyzes the synthesis of beta-citryl-L-glutamate and N-acetyl-L-aspartyl-L-glutamate. Beta-citryl-L-glutamate is synthesized more efficiently than N-acetyl-L-aspartyl-L-glutamate. The chain is Beta-citrylglutamate synthase B (Rimklb) from Mus musculus (Mouse).